We begin with the raw amino-acid sequence, 580 residues long: Formate--tetrahydrofolate ligase (580 aa).

83 to 90 (TPMGEGKT) contributes to the ATP binding site.

The protein belongs to the formate--tetrahydrofolate ligase family.

The enzyme catalyses (6S)-5,6,7,8-tetrahydrofolate + formate + ATP = (6R)-10-formyltetrahydrofolate + ADP + phosphate. Its pathway is one-carbon metabolism; tetrahydrofolate interconversion. This chain is Formate--tetrahydrofolate ligase, found in Haloquadratum walsbyi (strain DSM 16790 / HBSQ001).